Here is a 265-residue protein sequence, read N- to C-terminus: Flap endonuclease Xni (265 aa).

Residue aspartate 111 coordinates Mg(2+). One can recognise a 5'-3' exonuclease domain in the interval 167 to 260; the sequence is VVPAQLVDFW…NLREIRYPPA (94 aa). Leucine 178, valine 189, and isoleucine 192 together coordinate K(+). The interaction with DNA stretch occupies residues 191 to 196; sequence GIGPKT.

This sequence belongs to the Xni family. Requires Mg(2+) as cofactor. It depends on K(+) as a cofactor.

Its function is as follows. Has flap endonuclease activity. During DNA replication, flap endonucleases cleave the 5'-overhanging flap structure that is generated by displacement synthesis when DNA polymerase encounters the 5'-end of a downstream Okazaki fragment. This is Flap endonuclease Xni from Aeromonas salmonicida (strain A449).